The sequence spans 383 residues: tRNA-specific 2-thiouridylase MnmA (383 aa).

ATP is bound by residues 6 to 13 (AMSGGVDS) and Leu32. Cys101 functions as the Nucleophile in the catalytic mechanism. An intrachain disulfide couples Cys101 to Cys199. Gly125 serves as a coordination point for ATP. An interaction with tRNA region spans residues 148-150 (KDQ). The Cysteine persulfide intermediate role is filled by Cys199.

It belongs to the MnmA/TRMU family.

The protein localises to the cytoplasm. The enzyme catalyses S-sulfanyl-L-cysteinyl-[protein] + uridine(34) in tRNA + AH2 + ATP = 2-thiouridine(34) in tRNA + L-cysteinyl-[protein] + A + AMP + diphosphate + H(+). Catalyzes the 2-thiolation of uridine at the wobble position (U34) of tRNA, leading to the formation of s(2)U34. This is tRNA-specific 2-thiouridylase MnmA from Kocuria rhizophila (strain ATCC 9341 / DSM 348 / NBRC 103217 / DC2201).